Reading from the N-terminus, the 252-residue chain is Imidazole glycerol phosphate synthase subunit HisF (252 aa).

Active-site residues include D11 and D130.

Belongs to the HisA/HisF family. As to quaternary structure, heterodimer of HisH and HisF.

The protein localises to the cytoplasm. It catalyses the reaction 5-[(5-phospho-1-deoxy-D-ribulos-1-ylimino)methylamino]-1-(5-phospho-beta-D-ribosyl)imidazole-4-carboxamide + L-glutamine = D-erythro-1-(imidazol-4-yl)glycerol 3-phosphate + 5-amino-1-(5-phospho-beta-D-ribosyl)imidazole-4-carboxamide + L-glutamate + H(+). The protein operates within amino-acid biosynthesis; L-histidine biosynthesis; L-histidine from 5-phospho-alpha-D-ribose 1-diphosphate: step 5/9. Its function is as follows. IGPS catalyzes the conversion of PRFAR and glutamine to IGP, AICAR and glutamate. The HisF subunit catalyzes the cyclization activity that produces IGP and AICAR from PRFAR using the ammonia provided by the HisH subunit. This chain is Imidazole glycerol phosphate synthase subunit HisF, found in Geobacillus thermodenitrificans (strain NG80-2).